The chain runs to 147 residues: UPF0260 protein CJA_2436 (147 aa).

Belongs to the UPF0260 family.

In Cellvibrio japonicus (strain Ueda107) (Pseudomonas fluorescens subsp. cellulosa), this protein is UPF0260 protein CJA_2436.